We begin with the raw amino-acid sequence, 371 residues long: UDP-N-acetylglucosamine--N-acetylmuramyl-(pentapeptide) pyrophosphoryl-undecaprenol N-acetylglucosamine transferase (371 aa).

Residues 10–12, Asn-124, Arg-165, Ser-191, Ile-246, and Gln-291 contribute to the UDP-N-acetyl-alpha-D-glucosamine site; that span reads TGG.

This sequence belongs to the glycosyltransferase 28 family. MurG subfamily.

The protein resides in the cell inner membrane. It carries out the reaction di-trans,octa-cis-undecaprenyl diphospho-N-acetyl-alpha-D-muramoyl-L-alanyl-D-glutamyl-meso-2,6-diaminopimeloyl-D-alanyl-D-alanine + UDP-N-acetyl-alpha-D-glucosamine = di-trans,octa-cis-undecaprenyl diphospho-[N-acetyl-alpha-D-glucosaminyl-(1-&gt;4)]-N-acetyl-alpha-D-muramoyl-L-alanyl-D-glutamyl-meso-2,6-diaminopimeloyl-D-alanyl-D-alanine + UDP + H(+). It functions in the pathway cell wall biogenesis; peptidoglycan biosynthesis. Its function is as follows. Cell wall formation. Catalyzes the transfer of a GlcNAc subunit on undecaprenyl-pyrophosphoryl-MurNAc-pentapeptide (lipid intermediate I) to form undecaprenyl-pyrophosphoryl-MurNAc-(pentapeptide)GlcNAc (lipid intermediate II). In Geobacter sp. (strain M21), this protein is UDP-N-acetylglucosamine--N-acetylmuramyl-(pentapeptide) pyrophosphoryl-undecaprenol N-acetylglucosamine transferase.